The sequence spans 179 residues: Large ribosomal subunit protein uL5 (179 aa).

Belongs to the universal ribosomal protein uL5 family. In terms of assembly, part of the 50S ribosomal subunit; part of the 5S rRNA/L5/L18/L25 subcomplex. Contacts the 5S rRNA and the P site tRNA. Forms a bridge to the 30S subunit in the 70S ribosome.

In terms of biological role, this is one of the proteins that bind and probably mediate the attachment of the 5S RNA into the large ribosomal subunit, where it forms part of the central protuberance. In the 70S ribosome it contacts protein S13 of the 30S subunit (bridge B1b), connecting the 2 subunits; this bridge is implicated in subunit movement. Contacts the P site tRNA; the 5S rRNA and some of its associated proteins might help stabilize positioning of ribosome-bound tRNAs. In Vibrio atlanticus (strain LGP32) (Vibrio splendidus (strain Mel32)), this protein is Large ribosomal subunit protein uL5.